The sequence spans 451 residues: Protein NINJA homolog 1 (451 aa).

Disordered stretches follow at residues 1–223 (MDDE…QGNP), 321–346 (ISQA…DDKK), and 427–451 (DAPG…SAQN). The span at 23 to 35 (KARDAPLEPKAEP) shows a compositional bias: basic and acidic residues. Composition is skewed to polar residues over residues 38–49 (EESSSKGVSQTP), 86–103 (PGSS…QKPV), and 143–153 (ISISTDDGSTG). Acidic residues predominate over residues 154 to 163 (ENEDVAESEA). Low complexity predominate over residues 207 to 216 (SFSGSESSSG).

Belongs to the Ninja family. Interacts with TIFY10C/JAZ8. Interacts with TIFY11A/JAZ9.

It is found in the nucleus. In Oryza sativa subsp. japonica (Rice), this protein is Protein NINJA homolog 1.